We begin with the raw amino-acid sequence, 523 residues long: Probable glucose-1-phosphate adenylyltransferase large subunit, chloroplastic (523 aa).

This sequence belongs to the bacterial/plant glucose-1-phosphate adenylyltransferase family. Heterotetramer.

It localises to the plastid. The protein localises to the chloroplast. The catalysed reaction is alpha-D-glucose 1-phosphate + ATP + H(+) = ADP-alpha-D-glucose + diphosphate. It functions in the pathway glycan biosynthesis; starch biosynthesis. With respect to regulation, activated by 3'phosphoglycerate, inhibited by orthophosphate. Allosteric regulation. In terms of biological role, this protein plays a role in synthesis of starch. It catalyzes the synthesis of the activated glycosyl donor, ADP-glucose from Glc-1-P and ATP. This is Probable glucose-1-phosphate adenylyltransferase large subunit, chloroplastic from Arabidopsis thaliana (Mouse-ear cress).